The sequence spans 803 residues: Volume-regulated anion channel subunit LRRC8C (803 aa).

Over M1–P22 the chain is Cytoplasmic. The chain crosses the membrane as a helical span at residues W23–M48. Residues Q49–A124 lie on the Extracellular side of the membrane. 2 disulfides stabilise this stretch: C54–C308 and C115–C293. A helical transmembrane segment spans residues K125–F144. The Cytoplasmic segment spans residues W145–Y262. Positions E177–N206 are disordered. Positions N191–N206 are enriched in polar residues. A phosphoserine mark is found at S212 and S215. Residues V263–V284 traverse the membrane as a helical segment. Residues S285 to H314 are Extracellular-facing. Residues L315–Y339 traverse the membrane as a helical segment. At W340–D803 the chain is on the cytoplasmic side. LRR repeat units lie at residues W409 to T420, N421 to I443, L446 to L466, D467 to F488, K490 to L513, N515 to S537, L541 to V563, H566 to K586, M588 to L611, S613 to H635, R637 to L659, T660 to C682, K684 to L705, Q706 to C728, K730 to L751, L752 to C774, and A776 to Q799.

The protein belongs to the LRRC8 family. In terms of assembly, heterohexamer; oligomerizes with other LRRC8 proteins (LRRC8A, LRRC8B, LRRC8D and/or LRRC8E) to form a heterohexamer. Homoheptamer; inactive, likely because it is not targeted to the plasma membrane in the absence of LRRC8A. In vivo, the subunit composition may depend primarily on expression levels, and heterooligomeric channels containing various proportions of the different LRRC8 proteins may coexist. As to expression, expressed at very low levels in adipose tissue.

The protein localises to the cell membrane. It is found in the endoplasmic reticulum membrane. The catalysed reaction is chloride(in) = chloride(out). The enzyme catalyses iodide(out) = iodide(in). It carries out the reaction taurine(out) = taurine(in). It catalyses the reaction 2',3'-cGAMP(out) = 2',3'-cGAMP(in). Functionally, non-essential component of the volume-regulated anion channel (VRAC, also named VSOAC channel), an anion channel required to maintain a constant cell volume in response to extracellular or intracellular osmotic changes. The VRAC channel conducts iodide better than chloride and can also conduct organic osmolytes like taurine. Plays a redundant role in the efflux of amino acids, such as aspartate and glutamate, in response to osmotic stress. The VRAC channel also mediates transport of immunoreactive cyclic dinucleotide GMP-AMP (2'-3'-cGAMP), an immune messenger produced in response to DNA virus in the cytosol. Channel activity requires LRRC8A plus at least one other family member (LRRC8B, LRRC8C, LRRC8D or LRRC8E); channel characteristics depend on the precise subunit composition. May play a role in adipogenesis. The sequence is that of Volume-regulated anion channel subunit LRRC8C from Mus musculus (Mouse).